Reading from the N-terminus, the 465-residue chain is MGRTLAEKVWDAHVVRRADGEPDLLYIDLHLVHEVTSPQAFEALRLAGRPLRRPDLTLATEDHNVPTTNTLAPIADPISAAQVEALRKNCAEFGVRLYPMNDPGQGIVHVVGPQLGLSQPGMTIVCGDSHTSTHGAFGALAFGIGTSQVEHVLATQTLPQSRPKTMAVTVDGDLPAGVTAKDLILAIIARIGTGGGAGHVIEYRGAAVRGLSMEGRMTVCNMSIEAGARAGMIAPDDTTFEYLAGRAHAATGPDWDQAVAYWRTLASDDDAVFDREVVIDAASLTPYVTWGTNPGQAAPLGSLIPAPADYADPAARASVERALTYMGLTAGTPLSEVTVDTVFIGSCTNGRLSDLRAAADVLRGRRVADGVRALVVPGSMQVKAEAEAEGLDEVFRAAGAEWRSAGCSMCLGMNPDTLRPGERSASTSNRNFEGRQGPGGRTHLVSPAVAAATAVTGQLTAPAQL.

3 residues coordinate [4Fe-4S] cluster: cysteine 347, cysteine 407, and cysteine 410. The tract at residues 416 to 443 (DTLRPGERSASTSNRNFEGRQGPGGRTH) is disordered.

Belongs to the aconitase/IPM isomerase family. LeuC type 1 subfamily. As to quaternary structure, heterodimer of LeuC and LeuD. [4Fe-4S] cluster serves as cofactor.

It catalyses the reaction (2R,3S)-3-isopropylmalate = (2S)-2-isopropylmalate. It participates in amino-acid biosynthesis; L-leucine biosynthesis; L-leucine from 3-methyl-2-oxobutanoate: step 2/4. Functionally, catalyzes the isomerization between 2-isopropylmalate and 3-isopropylmalate, via the formation of 2-isopropylmaleate. This Frankia alni (strain DSM 45986 / CECT 9034 / ACN14a) protein is 3-isopropylmalate dehydratase large subunit.